Consider the following 80-residue polypeptide: Peptide LaIT2 (80 aa).

Positions 1-21 (MAKHLIVMFLVIMVISSLVDC) are cleaved as a signal peptide. The BetaSPN-type CS-alpha/beta domain maps to 49–80 (QYGCPIISNMCEDHCRRKKMEGQCDLLDCVCS). Disulfide bonds link C52–C72, C59–C77, and C63–C79.

It belongs to the long chain scorpion toxin family. Class 2 subfamily. As to expression, expressed by the venom gland.

It is found in the secreted. Its function is as follows. Dual-function toxin that acts both as an insecticidal and an antimicrobial peptide. May inhibit voltage-gated potassium channels (Kv). This amphipathic peptide causes significant antimicrobial activity against E.coli (MIC=7 uM) but does not show any activity against S.aureus even at high concentration. In vivo, causes paralysis or death to crickets. The chain is Peptide LaIT2 from Liocheles australasiae (Dwarf wood scorpion).